Consider the following 238-residue polypeptide: LRRN4 C-terminal-like protein (238 aa).

An N-terminal signal peptide occupies residues 1–22; sequence MLGSPCLLWLLAVTFLVPRAQP. The Extracellular segment spans residues 23 to 194; sequence LAPQDFEEEE…RLAVPPNPRT (172 aa). The region spanning 82-176 is the Fibronectin type-III domain; that stretch reads PPDPPRMGEV…AGGEGLEGAD (95 aa). Asn132 carries N-linked (GlcNAc...) asparagine glycosylation. A helical transmembrane segment spans residues 195 to 215; the sequence is LVHAAVGVGTALALLSCAALV. The Cytoplasmic segment spans residues 216–238; it reads WHFCLRDRWGCPRRAAARAAGAL.

Its subcellular location is the membrane. In Homo sapiens (Human), this protein is LRRN4 C-terminal-like protein (LRRN4CL).